Here is a 498-residue protein sequence, read N- to C-terminus: MDNELFMNTEFPPPPEMATHFEHQQSSSSAMMLNWALMDPNPHQDSSFLWEKSTEQQQQQSIFDSALSSLVSSPTPSNSNFSGGGGDGFLIRELIGKLGNIGNNNNNSGEIYGTPMSRSASCYATPMSSPPPPTNSNSQMMMNRTTPLTEFSADPGFAERAARFSCFGSRSFNGRTNTNLPINNGNNMVNNSGKLTRVSSTPALKALVSPEVTPGGEFSRKRKSVPKGKSKENPISTASPSPSFSKTAEKNGGKGGSKSSEEKGGKRRREEEDDEEEEGEGEGNKSNNTKPPEPPKDYIHVRARRGQATDSHSLAERVRREKIGERMKLLQDLVPGCNKVTGKALMLDEIINYVQSLQRQVEFLSMKLSSVNDTRLDFNVDALVSKDVMIPSSNNRLHEEGLQSKSSSHHHQQQLNIYNNNSQLLPNISSNNMMLQSPMNSLETSTLARSFTHLPTLTQFTDSISQYQMFSEEDLQSIVGMGVAENPNNESQHMKIEL.

Disordered regions lie at residues 1–24 and 207–297; these read MDNELFMNTEFPPPPEMATHFEHQ and LVSP…PPKD. The segment covering 233–246 has biased composition (polar residues); sequence NPISTASPSPSFSK. Positions 259–270 are enriched in basic and acidic residues; that stretch reads SSEEKGGKRRRE. The segment covering 271–281 has biased composition (acidic residues); the sequence is EEDDEEEEGEG. In terms of domain architecture, bHLH spans 307–357; the sequence is QATDSHSLAERVRREKIGERMKLLQDLVPGCNKVTGKALMLDEIINYVQSL.

Homodimer. Binds reversibly to CRY2 after blue light illumination. Expressed constitutively in roots, leaves, stems, and flowers.

The protein localises to the nucleus. In terms of biological role, transcription factor that binds DNA to G box 5'-CACGTG-3' and to E-box 5'-CANNTG-3'. Binds to chromatin DNA of the FT gene and promotes its expression, and thus triggers flowering in response to blue light. In Arabidopsis thaliana (Mouse-ear cress), this protein is Transcription factor bHLH78 (BHLH78).